Consider the following 416-residue polypeptide: Alpha-1-antiproteinase (416 aa).

The first 24 residues, Met-1 to Ala-24, serve as a signal peptide directing secretion. Asn-68, Asn-105, Asn-143, and Asn-269 each carry an N-linked (GlcNAc...) asparagine glycan. An RCL region spans residues Gly-371–Arg-390. The residue at position 381 (Ser-381) is a Phosphoserine.

It belongs to the serpin family. In terms of assembly, interacts with CELA2A. Interacts with ERGIC3 and LMAN1/ERGIC53. Interacts with PRSS1/Trypsin. In terms of tissue distribution, plasma.

It is found in the secreted. Its function is as follows. Inhibits human leukocyte elastase, pig pancreatic elastase and bovine trypsin on a 1:1 molar basis. This chain is Alpha-1-antiproteinase, found in Ovis aries (Sheep).